The following is a 459-amino-acid chain: Disease resistance protein CHL1 (459 aa).

The region spanning 16-170 (REVDVFLSFC…QIARDISLVV (155 aa)) is the TIR domain. Glutamate 89 is a catalytic residue. Residues 191-401 (VYDLLALEVN…LLKLKAKQGG (211 aa)) form the NB-ARC domain. The span at 429–440 (ERKESSQDKSQQ) shows a compositional bias: basic and acidic residues. The disordered stretch occupies residues 429–459 (ERKESSQDKSQQESEVAADILIGKESSQDKQ).

As to expression, mostly expressed in leaves, stems and roots, and, to a lower extent, in flowers and siliques.

Its subcellular location is the cytoplasm. The catalysed reaction is NAD(+) + H2O = ADP-D-ribose + nicotinamide + H(+). Functionally, confers resistance to low temperatures by limiting chloroplast damage and cell death, thus maintaining growth homeostasis. The protein is Disease resistance protein CHL1 of Arabidopsis thaliana (Mouse-ear cress).